Reading from the N-terminus, the 319-residue chain is Methionyl-tRNA formyltransferase (319 aa).

113–116 (SLLP) is a binding site for (6S)-5,6,7,8-tetrahydrofolate.

This sequence belongs to the Fmt family.

The catalysed reaction is L-methionyl-tRNA(fMet) + (6R)-10-formyltetrahydrofolate = N-formyl-L-methionyl-tRNA(fMet) + (6S)-5,6,7,8-tetrahydrofolate + H(+). Functionally, attaches a formyl group to the free amino group of methionyl-tRNA(fMet). The formyl group appears to play a dual role in the initiator identity of N-formylmethionyl-tRNA by promoting its recognition by IF2 and preventing the misappropriation of this tRNA by the elongation apparatus. The polypeptide is Methionyl-tRNA formyltransferase (Pseudomonas fluorescens (strain ATCC BAA-477 / NRRL B-23932 / Pf-5)).